Reading from the N-terminus, the 366-residue chain is MKFLDEAKVYIRSGDGGAGAVSFRREKFIEFGGPDGGDGGRGGDVWVEAVNGLNTLIDFRFQQHFKATVGTHGMGRNRTGANGEHVTLKVPVGTQIFEEDAETLIVDMVTEGQRFRLAAGGNGGFGNAHFKSATNQAPDWANPGLEGEEKTIWLRLKLIADAGLVGLPNAGKSTFLAAVTRARPKIANYPFTTLHPNLGVATVDEREFILADIPGLIEGAHEGVGIGDRFLGHVERTRVLLHLVSAQEEDVAKAYTTVAHELEAYDGGLEDKPEIVALSQIDVLDEDELKKKLKALQKACSKKPMMISAITGKGMLEVLRALRDVIVENRSYDDETISQRPKKHRHKLEDRPQHENGPEESEEGEE.

The region spanning 1-159 is the Obg domain; the sequence is MKFLDEAKVY…KTIWLRLKLI (159 aa). Residues 160–327 enclose the OBG-type G domain; that stretch reads ADAGLVGLPN…VLRALRDVIV (168 aa). Residues 166–173, 191–195, 212–215, 279–282, and 308–310 contribute to the GTP site; these read GLPNAGKS, FTTLH, DIPG, SQID, and SAI. Mg(2+) is bound by residues serine 173 and threonine 193. The disordered stretch occupies residues 333-366; it reads DDETISQRPKKHRHKLEDRPQHENGPEESEEGEE. Residues 347 to 357 show a composition bias toward basic and acidic residues; the sequence is KLEDRPQHENG.

This sequence belongs to the TRAFAC class OBG-HflX-like GTPase superfamily. OBG GTPase family. In terms of assembly, monomer. Requires Mg(2+) as cofactor.

The protein localises to the cytoplasm. In terms of biological role, an essential GTPase which binds GTP, GDP and possibly (p)ppGpp with moderate affinity, with high nucleotide exchange rates and a fairly low GTP hydrolysis rate. Plays a role in control of the cell cycle, stress response, ribosome biogenesis and in those bacteria that undergo differentiation, in morphogenesis control. In Allorhizobium ampelinum (strain ATCC BAA-846 / DSM 112012 / S4) (Agrobacterium vitis (strain S4)), this protein is GTPase Obg.